Here is a 324-residue protein sequence, read N- to C-terminus: uncharacterized protein (324 aa).

Transmembrane regions (helical) follow at residues 4 to 24, 63 to 83, 106 to 128, 132 to 151, 179 to 199, 209 to 229, 246 to 266, and 282 to 302; these read GNKV…PEFM, AALL…EGIL, ALFY…ISFL, WQVQ…SHLL, LADI…AVTL, GLDG…LVIM, LETA…LYTL, and GTWK…GWFM.

Belongs to the TerC family.

The protein resides in the cell membrane. This is an uncharacterized protein from Bacillus subtilis (strain 168).